The chain runs to 202 residues: Methylthioribulose-1-phosphate dehydratase (202 aa).

Residues H93 and H95 each coordinate Zn(2+).

This sequence belongs to the aldolase class II family. MtnB subfamily. Zn(2+) serves as cofactor.

The enzyme catalyses 5-(methylsulfanyl)-D-ribulose 1-phosphate = 5-methylsulfanyl-2,3-dioxopentyl phosphate + H2O. It functions in the pathway amino-acid biosynthesis; L-methionine biosynthesis via salvage pathway; L-methionine from S-methyl-5-thio-alpha-D-ribose 1-phosphate: step 2/6. Catalyzes the dehydration of methylthioribulose-1-phosphate (MTRu-1-P) into 2,3-diketo-5-methylthiopentyl-1-phosphate (DK-MTP-1-P). The polypeptide is Methylthioribulose-1-phosphate dehydratase (Klebsiella pneumoniae (strain 342)).